We begin with the raw amino-acid sequence, 881 residues long: Armadillo repeat-containing protein 3 (881 aa).

12 ARM repeats span residues 15 to 54 (DVFD…KFAL), 57 to 96 (EENK…ILAS), 98 to 138 (SDVK…NMSV), 140 to 179 (YTGK…NLVQ), 181 to 220 (FQCR…VITC), 222 to 262 (KEAR…NCLE), 264 to 304 (MDTM…KAAY), 306 to 345 (PENR…ALCE), 346 to 385 (NLSC…NLTT), 388 to 427 (PANA…NMAT), 429 to 468 (EPLR…ATAC), and 470 to 509 (VEAR…VCAG). 2 S-palmitoyl cysteine lipidation sites follow: Cys507 and Cys518. Positions 605 to 659 (NNKSDTSPPPSMEDKSSDVGYGRSISSSSSLRRGSKEKANAIFGSPTEEKSEPAS) are disordered. A compositionally biased stretch (low complexity) spans 622 to 636 (DVGYGRSISSSSSLR).

In terms of assembly, homodimer. Interacts with PIK3C3, PIK3R4 and BECN1. Interacts (via ARM domains) with ATG14. Post-translationally, palmitoylation is important for its function in autophagy. As to expression, testis-specific.

Functionally, essential for male fertility and sperm motility. During spermatogenesis, promotes the autophagic degradation of excessive ribosomes, providing energy resources for mitochondria and thus ensuring sperm flagellar motility. This is Armadillo repeat-containing protein 3 (Armc3) from Mus musculus (Mouse).